We begin with the raw amino-acid sequence, 883 residues long: Valine--tRNA ligase (883 aa).

The 'HIGH' region motif lies at 51–61 (PNVTGKLHLGH). A 'KMSKS' region motif is present at residues 527–531 (KMSKS). ATP is bound at residue Lys530. Residues 811-847 (LEALIDLNVEIARLEKELEKWNKEVARVQGKLNNERF) are a coiled coil.

Belongs to the class-I aminoacyl-tRNA synthetase family. ValS type 1 subfamily. In terms of assembly, monomer.

The protein localises to the cytoplasm. The enzyme catalyses tRNA(Val) + L-valine + ATP = L-valyl-tRNA(Val) + AMP + diphosphate. Functionally, catalyzes the attachment of valine to tRNA(Val). As ValRS can inadvertently accommodate and process structurally similar amino acids such as threonine, to avoid such errors, it has a 'posttransfer' editing activity that hydrolyzes mischarged Thr-tRNA(Val) in a tRNA-dependent manner. In Listeria monocytogenes serovar 1/2a (strain ATCC BAA-679 / EGD-e), this protein is Valine--tRNA ligase.